The following is a 144-amino-acid chain: Large ribosomal subunit protein uL16 (144 aa).

The protein belongs to the universal ribosomal protein uL16 family. In terms of assembly, part of the 50S ribosomal subunit.

Functionally, binds 23S rRNA and is also seen to make contacts with the A and possibly P site tRNAs. This chain is Large ribosomal subunit protein uL16, found in Clostridium botulinum (strain Alaska E43 / Type E3).